The chain runs to 111 residues: Iron-sulfur cluster assembly protein CyaY (111 aa).

It belongs to the frataxin family.

Its function is as follows. Involved in iron-sulfur (Fe-S) cluster assembly. May act as a regulator of Fe-S biogenesis. The protein is Iron-sulfur cluster assembly protein CyaY of Cupriavidus pinatubonensis (strain JMP 134 / LMG 1197) (Cupriavidus necator (strain JMP 134)).